We begin with the raw amino-acid sequence, 177 residues long: MSDMTTIARPYAKAAFDFAVDKDQLDQWGQMLSFATEVTKNEQMNELLKGSVSADKLAEIFVAVCGEQVDAHGQNLIKVMAENGRLTALPDVCEQFFLLKKEHEKEIDVEVISASELSDEQLANIGSKLEVRLERKVKLNCSVDETLLGGVIIRAGDLVIDNSARGRLNRLSDALQS.

This sequence belongs to the ATPase delta chain family. F-type ATPases have 2 components, F(1) - the catalytic core - and F(0) - the membrane proton channel. F(1) has five subunits: alpha(3), beta(3), gamma(1), delta(1), epsilon(1). F(0) has three main subunits: a(1), b(2) and c(10-14). The alpha and beta chains form an alternating ring which encloses part of the gamma chain. F(1) is attached to F(0) by a central stalk formed by the gamma and epsilon chains, while a peripheral stalk is formed by the delta and b chains.

The protein resides in the cell inner membrane. In terms of biological role, f(1)F(0) ATP synthase produces ATP from ADP in the presence of a proton or sodium gradient. F-type ATPases consist of two structural domains, F(1) containing the extramembraneous catalytic core and F(0) containing the membrane proton channel, linked together by a central stalk and a peripheral stalk. During catalysis, ATP synthesis in the catalytic domain of F(1) is coupled via a rotary mechanism of the central stalk subunits to proton translocation. Its function is as follows. This protein is part of the stalk that links CF(0) to CF(1). It either transmits conformational changes from CF(0) to CF(1) or is implicated in proton conduction. This Vibrio campbellii (strain ATCC BAA-1116) protein is ATP synthase subunit delta 1.